A 313-amino-acid polypeptide reads, in one-letter code: MSVPQRLVIATRASRLALWQAEHVRDRLRALYPACAVELLTLTTRGDQILDRTLSKVGGKGLFVKELETALLDGRADLAVHSLKDVPVDLQAPFELCAILERADPRDAFVSNQYTTLADLPAGAVVGTSSLRRESQIRQRYPHLSVKPLRGNLDTRLSKLDRGDYAAIVLAAAGLQRLGMGERIRSLLEPEDSLPAAGQGALGIEIRNDRNDLREWLAPLACSRTTACVVAERAVSRALGGSCQVPLAAYAELNGNSLALRALVASPDGTRVIRSQHAGPAEQAQAIGQAAAQELLSNGADAILAELQDPPAS.

At Cys-243 the chain carries S-(dipyrrolylmethanemethyl)cysteine.

It belongs to the HMBS family. In terms of assembly, monomer. It depends on dipyrromethane as a cofactor.

The enzyme catalyses 4 porphobilinogen + H2O = hydroxymethylbilane + 4 NH4(+). It functions in the pathway porphyrin-containing compound metabolism; protoporphyrin-IX biosynthesis; coproporphyrinogen-III from 5-aminolevulinate: step 2/4. Tetrapolymerization of the monopyrrole PBG into the hydroxymethylbilane pre-uroporphyrinogen in several discrete steps. The polypeptide is Porphobilinogen deaminase (Bordetella petrii (strain ATCC BAA-461 / DSM 12804 / CCUG 43448)).